The following is a 602-amino-acid chain: Myotubularin (602 aa).

Residues 1 to 40 (MASSSASDCDAHPVERESMRKVSQDGVRQDMSKSGPRLPG) are disordered. The span at 9–31 (CDAHPVERESMRKVSQDGVRQDM) shows a compositional bias: basic and acidic residues. S18 is subject to Phosphoserine. One can recognise a GRAM domain in the interval 28–97 (RQDMSKSGPR…GVISRIEKMG (70 aa)). Residues 163 to 538 (GWAIYNPVEE…RHLELWVNYY (376 aa)) form the Myotubularin phosphatase domain. Positions 288, 313, and 314 each coordinate a 1,2-diacyl-sn-glycero-3-phospho-(1D-myo-inositol-3,5-bisphosphate). Residues N288, N313, and I314 each contribute to the a 1,2-diacyl-sn-glycero-3-phospho-(1D-myo-inositol-3-phosphate) site. Catalysis depends on C375, which acts as the Phosphocysteine intermediate. A 1,2-diacyl-sn-glycero-3-phospho-(1D-myo-inositol-3,5-bisphosphate) contacts are provided by S376, D377, G378, W379, D380, R381, K417, and R421. The a 1,2-diacyl-sn-glycero-3-phospho-(1D-myo-inositol-3-phosphate) site is built by S376, D377, G378, W379, D380, and R381. R421 lines the a 1,2-diacyl-sn-glycero-3-phospho-(1D-myo-inositol-3-phosphate) pocket. T495 bears the Phosphothreonine mark. A compositionally biased stretch (polar residues) spans 578–592 (PTKLTDSSTPPSGSA). Residues 578 to 602 (PTKLTDSSTPPSGSAQIAPRMQTHF) form a disordered region.

Belongs to the protein-tyrosine phosphatase family. Non-receptor class myotubularin subfamily. As to quaternary structure, heterodimer with MTMR12. Interacts with KMT2A/MLL1 (via SET domain). Interacts with DES in skeletal muscle but not in cardiac muscle. Interacts with SPEG.

The protein localises to the cytoplasm. It localises to the cell membrane. The protein resides in the cell projection. It is found in the filopodium. Its subcellular location is the ruffle. The protein localises to the late endosome. It localises to the myofibril. The protein resides in the sarcomere. It carries out the reaction a 1,2-diacyl-sn-glycero-3-phospho-(1D-myo-inositol-3-phosphate) + H2O = a 1,2-diacyl-sn-glycero-3-phospho-(1D-myo-inositol) + phosphate. The enzyme catalyses a 1,2-diacyl-sn-glycero-3-phospho-(1D-myo-inositol-3,5-bisphosphate) + H2O = a 1,2-diacyl-sn-glycero-3-phospho-(1D-myo-inositol-5-phosphate) + phosphate. The catalysed reaction is 1,2-dioctanoyl-sn-glycero-3-phospho-(1-D-myo-inositol-3-phosphate) + H2O = 1,2-dioctanoyl-sn-glycero-3-phospho-(1D-myo-inositol) + phosphate. It catalyses the reaction 1,2-dioctanoyl-sn-glycero-3-phospho-(1D-myo-inositol-3,5-bisphosphate) + H2O = 1,2-dioctanoyl-sn-glycero-3-phospho-(1D-myo-inositol-5-phosphate) + phosphate. It carries out the reaction 1,2-dihexadecanoyl-sn-glycero-3-phospho-(1D-myo-inositol-3,5-phosphate) + H2O = 1,2-dihexadecanoyl-sn-glycero-3-phospho-(1D-myo-inositol-5-phosphate) + phosphate. Allosterically activated by phosphatidylinositol 5-phosphate (PI5P). Its function is as follows. Lipid phosphatase which dephosphorylates phosphatidylinositol 3-monophosphate (PI3P) and phosphatidylinositol 3,5-bisphosphate (PI(3,5)P2). Has also been shown to dephosphorylate phosphotyrosine- and phosphoserine-containing peptides. Negatively regulates EGFR degradation through regulation of EGFR trafficking from the late endosome to the lysosome. Plays a role in vacuolar formation and morphology. Regulates desmin intermediate filament assembly and architecture. Plays a role in mitochondrial morphology and positioning. Required for skeletal muscle maintenance but not for myogenesis. In skeletal muscles, stabilizes MTMR12 protein levels. In Rattus norvegicus (Rat), this protein is Myotubularin.